The sequence spans 98 residues: Peptide YY (98 aa).

Positions 1–28 (MVAVRRPWPVMVAMLLVLLACLGALVDA) are cleaved as a signal peptide. Residue Ser41 is modified to Phosphoserine. Tyrosine amide is present on Tyr64. Positions 68 to 98 (EVPAALFSKLLFTDDSENLPFRSRPEGVDQW) are excised as a propeptide.

It belongs to the NPY family. In terms of processing, the peptide YY form is cleaved at Pro-30 by the prolyl endopeptidase FAP (seprase) activity (in vitro) to generate peptide YY(3-36).

The protein localises to the secreted. This gut peptide inhibits exocrine pancreatic secretion, has a vasoconstrictory action and inhibitis jejunal and colonic mobility. The protein is Peptide YY (Pyy) of Rattus norvegicus (Rat).